We begin with the raw amino-acid sequence, 209 residues long: Ribosomal RNA large subunit methyltransferase E (209 aa).

5 residues coordinate S-adenosyl-L-methionine: G63, W65, D83, D99, and D124. Residue K164 is the Proton acceptor of the active site.

Belongs to the class I-like SAM-binding methyltransferase superfamily. RNA methyltransferase RlmE family.

It is found in the cytoplasm. The catalysed reaction is uridine(2552) in 23S rRNA + S-adenosyl-L-methionine = 2'-O-methyluridine(2552) in 23S rRNA + S-adenosyl-L-homocysteine + H(+). Specifically methylates the uridine in position 2552 of 23S rRNA at the 2'-O position of the ribose in the fully assembled 50S ribosomal subunit. This chain is Ribosomal RNA large subunit methyltransferase E, found in Photobacterium profundum (strain SS9).